We begin with the raw amino-acid sequence, 364 residues long: Peptide chain release factor 2 (364 aa).

An N5-methylglutamine modification is found at glutamine 251.

This sequence belongs to the prokaryotic/mitochondrial release factor family. In terms of processing, methylated by PrmC. Methylation increases the termination efficiency of RF2.

It is found in the cytoplasm. In terms of biological role, peptide chain release factor 2 directs the termination of translation in response to the peptide chain termination codons UGA and UAA. In Buchnera aphidicola subsp. Schizaphis graminum (strain Sg), this protein is Peptide chain release factor 2 (prfB).